The following is a 100-amino-acid chain: Large ribosomal subunit protein uL23 (100 aa).

Belongs to the universal ribosomal protein uL23 family. Part of the 50S ribosomal subunit. Contacts protein L29, and trigger factor when it is bound to the ribosome.

Its function is as follows. One of the early assembly proteins it binds 23S rRNA. One of the proteins that surrounds the polypeptide exit tunnel on the outside of the ribosome. Forms the main docking site for trigger factor binding to the ribosome. The sequence is that of Large ribosomal subunit protein uL23 from Synechococcus sp. (strain CC9311).